Here is a 304-residue protein sequence, read N- to C-terminus: Methionyl-tRNA formyltransferase (304 aa).

Position 107-110 (107-110) interacts with (6S)-5,6,7,8-tetrahydrofolate; it reads SLLP.

The protein belongs to the Fmt family.

It carries out the reaction L-methionyl-tRNA(fMet) + (6R)-10-formyltetrahydrofolate = N-formyl-L-methionyl-tRNA(fMet) + (6S)-5,6,7,8-tetrahydrofolate + H(+). In terms of biological role, attaches a formyl group to the free amino group of methionyl-tRNA(fMet). The formyl group appears to play a dual role in the initiator identity of N-formylmethionyl-tRNA by promoting its recognition by IF2 and preventing the misappropriation of this tRNA by the elongation apparatus. The chain is Methionyl-tRNA formyltransferase from Coprothermobacter proteolyticus (strain ATCC 35245 / DSM 5265 / OCM 4 / BT).